Reading from the N-terminus, the 139-residue chain is Putative nickel-responsive regulator (139 aa).

Ni(2+) contacts are provided by His-79, His-90, His-92, and Cys-98.

This sequence belongs to the transcriptional regulatory CopG/NikR family. Ni(2+) serves as cofactor.

Its function is as follows. Transcriptional regulator. The chain is Putative nickel-responsive regulator from Pelobacter propionicus (strain DSM 2379 / NBRC 103807 / OttBd1).